The following is a 269-amino-acid chain: Hydroxyethylthiazole kinase (269 aa).

Met48 contacts substrate. ATP is bound by residues Lys124 and Thr170. Gly197 lines the substrate pocket.

Belongs to the Thz kinase family. Mg(2+) serves as cofactor.

It catalyses the reaction 5-(2-hydroxyethyl)-4-methylthiazole + ATP = 4-methyl-5-(2-phosphooxyethyl)-thiazole + ADP + H(+). Its pathway is cofactor biosynthesis; thiamine diphosphate biosynthesis; 4-methyl-5-(2-phosphoethyl)-thiazole from 5-(2-hydroxyethyl)-4-methylthiazole: step 1/1. Functionally, catalyzes the phosphorylation of the hydroxyl group of 4-methyl-5-beta-hydroxyethylthiazole (THZ). This is Hydroxyethylthiazole kinase from Clostridium kluyveri (strain NBRC 12016).